Consider the following 192-residue polypeptide: Putative B3 domain-containing protein At4g03160 (192 aa).

Positions 22–44 (VFFDQEEEEEDEEEEYDEESVCE) are disordered. Over residues 25–44 (DQEEEEEDEEEEYDEESVCE) the composition is skewed to acidic residues. The segment at residues 75–173 (KDNQYRLMLG…EICFAIDSTR (99 aa)) is a DNA-binding region (TF-B3).

Its subcellular location is the nucleus. This chain is Putative B3 domain-containing protein At4g03160, found in Arabidopsis thaliana (Mouse-ear cress).